The chain runs to 184 residues: Adenine phosphoribosyltransferase (184 aa).

It belongs to the purine/pyrimidine phosphoribosyltransferase family. Homodimer.

Its subcellular location is the cytoplasm. The catalysed reaction is AMP + diphosphate = 5-phospho-alpha-D-ribose 1-diphosphate + adenine. Its pathway is purine metabolism; AMP biosynthesis via salvage pathway; AMP from adenine: step 1/1. Functionally, catalyzes a salvage reaction resulting in the formation of AMP, that is energically less costly than de novo synthesis. This is Adenine phosphoribosyltransferase from Mycobacterium marinum (strain ATCC BAA-535 / M).